Here is a 1377-residue protein sequence, read N- to C-terminus: DNA-directed RNA polymerase subunit beta' (1377 aa).

Residues Cys70, Cys72, Cys85, and Cys88 each coordinate Zn(2+). Mg(2+)-binding residues include Asp460, Asp462, and Asp464. 4 residues coordinate Zn(2+): Cys808, Cys882, Cys889, and Cys892.

It belongs to the RNA polymerase beta' chain family. In terms of assembly, the RNAP catalytic core consists of 2 alpha, 1 beta, 1 beta' and 1 omega subunit. When a sigma factor is associated with the core the holoenzyme is formed, which can initiate transcription. It depends on Mg(2+) as a cofactor. Requires Zn(2+) as cofactor.

The enzyme catalyses RNA(n) + a ribonucleoside 5'-triphosphate = RNA(n+1) + diphosphate. In terms of biological role, DNA-dependent RNA polymerase catalyzes the transcription of DNA into RNA using the four ribonucleoside triphosphates as substrates. The protein is DNA-directed RNA polymerase subunit beta' of Geotalea uraniireducens (strain Rf4) (Geobacter uraniireducens).